A 458-amino-acid chain; its full sequence is tRNA-2-methylthio-N(6)-dimethylallyladenosine synthase (458 aa).

Residues 15–134 enclose the MTTase N-terminal domain; sequence KKVFIKTYGC…LPDLLEQTKQ (120 aa). Positions 24, 60, 97, 175, 179, and 182 each coordinate [4Fe-4S] cluster. The Radical SAM core domain occupies 161 to 393; the sequence is RKRGVSAFLT…QVLLLEQQNA (233 aa). The TRAM domain maps to 396-457; the sequence is RSKIGQTTDV…SNSFVGEMTN (62 aa).

Belongs to the methylthiotransferase family. MiaB subfamily. Monomer. Requires [4Fe-4S] cluster as cofactor.

It is found in the cytoplasm. The enzyme catalyses N(6)-dimethylallyladenosine(37) in tRNA + (sulfur carrier)-SH + AH2 + 2 S-adenosyl-L-methionine = 2-methylsulfanyl-N(6)-dimethylallyladenosine(37) in tRNA + (sulfur carrier)-H + 5'-deoxyadenosine + L-methionine + A + S-adenosyl-L-homocysteine + 2 H(+). Its function is as follows. Catalyzes the methylthiolation of N6-(dimethylallyl)adenosine (i(6)A), leading to the formation of 2-methylthio-N6-(dimethylallyl)adenosine (ms(2)i(6)A) at position 37 in tRNAs that read codons beginning with uridine. This is tRNA-2-methylthio-N(6)-dimethylallyladenosine synthase from Bartonella henselae (strain ATCC 49882 / DSM 28221 / CCUG 30454 / Houston 1) (Rochalimaea henselae).